Here is a 259-residue protein sequence, read N- to C-terminus: Flagellar L-ring protein 1 (259 aa).

The N-terminal stretch at 1 to 15 is a signal peptide; it reads MKRICLLALITTMSG. A lipid anchor (N-palmitoyl cysteine) is attached at cysteine 16. Residue cysteine 16 is the site of S-diacylglycerol cysteine attachment. A disordered region spans residues 38–63; it reads EGDKSKDESSGIVDTLRGRNDPVAGD.

It belongs to the FlgH family. In terms of assembly, the basal body constitutes a major portion of the flagellar organelle and consists of four rings (L,P,S, and M) mounted on a central rod.

It is found in the cell outer membrane. The protein resides in the bacterial flagellum basal body. Functionally, assembles around the rod to form the L-ring and probably protects the motor/basal body from shearing forces during rotation. This is Flagellar L-ring protein 1 (flgH1) from Vibrio parahaemolyticus serotype O3:K6 (strain RIMD 2210633).